The sequence spans 470 residues: E3 ubiquitin-protein ligase TRIM21 (470 aa).

The RING-type zinc-finger motif lies at 20–59; it reads CSICLDPMVEPMSIECGHCFCKECIFEVGKNGGSSCPECR. Positions 96, 99, 118, and 124 each coordinate Zn(2+). Residues 96 to 127 form a B box-type zinc finger; that stretch reads CMKHGEKLHLFCEEDGQALCWVCAQSGKHRDH. The stretch at 188 to 250 forms a coiled coil; that stretch reads LQNSLLAQEE…RGSELELLQE (63 aa). Positions 272 to 470 constitute a B30.2/SPRY domain; it reads DLTSTCPVPG…APLKLCPLKM (199 aa).

The protein belongs to the TRIM/RBCC family. As to quaternary structure, homotrimer. Component of a SCF(SKP2)-like complex containing CUL1, SKP1, TRIM21 and SKP2. Interacts with CALR, CUL1, FBXW11, HSPA5, IKBKB, IRF3, SKP1 and VCP. Interacts with SKP2; the interaction with SKP2 does not depend on an intact F-box domain. Interacts (via N-terminus and C-terminus) with DCP2 (via N-terminus and C-terminus). Interacts (via C-terminus) with IRF8 (via C-terminus). Interacts with ULK1, BECN1 and with ATG8 family members, including GABARAP, GABARAPL1, GABARAPL2 and MAP1LC3C/LC3C. Interacts with TRIM21 and SQSTM1/sequestosome 1. Interacts with IRF3. Interacts (via the SPRY domain) with NMI (via coiled-coil domain); the interaction promotes 'Lys-63'-linked ubiquitination of NMI. Interacts with IFI35 and NMI; the interaction facilitates NMI-IFI35 complex formation. In terms of processing, autoubiquitinated; does not lead to its proteasomal degradation. Deubiquitinated by USP4; leading to its stabilization. Autoubiquitinated.

The protein resides in the cytoplasm. The protein localises to the cytoplasmic vesicle. Its subcellular location is the autophagosome. It localises to the nucleus. It is found in the P-body. The protein resides in the stress granule. It carries out the reaction S-ubiquitinyl-[E2 ubiquitin-conjugating enzyme]-L-cysteine + [acceptor protein]-L-lysine = [E2 ubiquitin-conjugating enzyme]-L-cysteine + N(6)-ubiquitinyl-[acceptor protein]-L-lysine.. Its pathway is protein modification; protein ubiquitination. Its function is as follows. E3 ubiquitin-protein ligase whose activity is dependent on E2 enzymes, UBE2D1, UBE2D2, UBE2E1 and UBE2E2. Forms a ubiquitin ligase complex in cooperation with the E2 UBE2D2 that is used not only for the ubiquitination of USP4 and IKBKB but also for its self-ubiquitination. Component of cullin-RING-based SCF (SKP1-CUL1-F-box protein) E3 ubiquitin-protein ligase complexes such as SCF(SKP2)-like complexes. A TRIM21-containing SCF(SKP2)-like complex is shown to mediate ubiquitination of CDKN1B ('Thr-187' phosphorylated-form), thereby promoting its degradation by the proteasome. Monoubiquitinates IKBKB that will negatively regulates Tax-induced NF-kappa-B signaling. Negatively regulates IFN-beta production post-pathogen recognition by catalyzing polyubiquitin-mediated degradation of IRF3. Mediates the ubiquitin-mediated proteasomal degradation of IgG1 heavy chain, which is linked to the VCP-mediated ER-associated degradation (ERAD) pathway. Promotes IRF8 ubiquitination, which enhanced the ability of IRF8 to stimulate cytokine genes transcription in macrophages. Plays a role in the regulation of the cell cycle progression. Enhances the decapping activity of DCP2. Exists as a ribonucleoprotein particle present in all mammalian cells studied and composed of a single polypeptide and one of four small RNA molecules. At least two isoforms are present in nucleated and red blood cells, and tissue specific differences in RO/SSA proteins have been identified. The common feature of these proteins is their ability to bind HY RNAs.2. Involved in the regulation of innate immunity and the inflammatory response in response to IFNG/IFN-gamma. Organizes autophagic machinery by serving as a platform for the assembly of ULK1, Beclin 1/BECN1 and ATG8 family members and recognizes specific autophagy targets, thus coordinating target recognition with assembly of the autophagic apparatus and initiation of autophagy. Also regulates autophagy through FIP200/RB1CC1 ubiquitination and subsequent decreased protein stability. Represses the innate antiviral response by facilitating the formation of the NMI-IFI35 complex through 'Lys-63'-linked ubiquitination of NMI. During viral infection, promotes cell pyroptosis by mediating 'Lys-6'-linked ubiquitination of ISG12a/IFI27, facilitating its translocation into the mitochondria and subsequent CASP3 activation. When up-regulated through the IFN/JAK/STAT signaling pathway, promotes 'Lys-27'-linked ubiquitination of MAVS, leading to the recruitment of TBK1 and up-regulation of innate immunity. Mediates 'Lys-63'-linked polyubiquitination of G3BP1 in response to heat shock, leading to stress granule disassembly. In Mus musculus (Mouse), this protein is E3 ubiquitin-protein ligase TRIM21 (Trim21).